The sequence spans 355 residues: Phosphate acyltransferase (355 aa).

It belongs to the PlsX family. In terms of assembly, homodimer. Probably interacts with PlsY.

The protein localises to the cytoplasm. The catalysed reaction is a fatty acyl-[ACP] + phosphate = an acyl phosphate + holo-[ACP]. The protein operates within lipid metabolism; phospholipid metabolism. Catalyzes the reversible formation of acyl-phosphate (acyl-PO(4)) from acyl-[acyl-carrier-protein] (acyl-ACP). This enzyme utilizes acyl-ACP as fatty acyl donor, but not acyl-CoA. This Rhodospirillum centenum (strain ATCC 51521 / SW) protein is Phosphate acyltransferase.